Consider the following 388-residue polypeptide: tRNA-specific 2-thiouridylase MnmA (388 aa).

ATP-binding positions include 26–33 and Leu-52; that span reads GLSGGVDS. Catalysis depends on Cys-113, which acts as the Nucleophile. An intrachain disulfide couples Cys-113 to Cys-223. Gly-138 contributes to the ATP binding site. The interval 173–175 is interaction with tRNA; it reads KDQ. The Cysteine persulfide intermediate role is filled by Cys-223. Residues 328-329 form an interaction with tRNA region; it reads RY.

It belongs to the MnmA/TRMU family.

Its subcellular location is the cytoplasm. The enzyme catalyses S-sulfanyl-L-cysteinyl-[protein] + uridine(34) in tRNA + AH2 + ATP = 2-thiouridine(34) in tRNA + L-cysteinyl-[protein] + A + AMP + diphosphate + H(+). Its function is as follows. Catalyzes the 2-thiolation of uridine at the wobble position (U34) of tRNA, leading to the formation of s(2)U34. The sequence is that of tRNA-specific 2-thiouridylase MnmA from Prochlorococcus marinus (strain NATL2A).